Here is a 289-residue protein sequence, read N- to C-terminus: Putative transmembrane protein ORF289 (289 aa).

Residues 1-152 (MAIAKEFLLT…QYTSVVTFRT (152 aa)) lie on the Extracellular side of the membrane. The chain crosses the membrane as a helical span at residues 153–173 (LVAPILYFFALFLVPAWSTVL). The Cytoplasmic segment spans residues 174–234 (KQNPTFPQSQ…NGEVTSTQVN (61 aa)). The chain crosses the membrane as a helical span at residues 235 to 255 (APIFIGVTTPSGVLVLAYNYY). Topologically, residues 256-289 (SGTISKYVSLTVTTTYGSATVINQFETKTTGGTT) are extracellular.

Its subcellular location is the host membrane. The chain is Putative transmembrane protein ORF289 from Acidianus sp. F28 (AFV-2).